We begin with the raw amino-acid sequence, 317 residues long: Cytochrome c biogenesis protein CcsA (317 aa).

The next 8 helical transmembrane spans lie at 17-37, 44-64, 71-91, 101-121, 143-163, 223-243, 252-272, and 284-304; these read VVSI…IVGL, GMIV…IYSG, LYES…LPYL, ITSP…LTQI, MILS…LLVI, IISI…VWAN, WDPK…YLHI, and AIVA…INIL.

This sequence belongs to the CcmF/CycK/Ccl1/NrfE/CcsA family. As to quaternary structure, may interact with Ccs1.

The protein resides in the plastid. The protein localises to the chloroplast thylakoid membrane. In terms of biological role, required during biogenesis of c-type cytochromes (cytochrome c6 and cytochrome f) at the step of heme attachment. This chain is Cytochrome c biogenesis protein CcsA, found in Pelargonium hortorum (Common geranium).